The following is a 412-amino-acid chain: P-selectin glycoprotein ligand 1 (412 aa).

The signal sequence occupies residues 1 to 17 (MPLQLLLLLILLGPGNS). Residues 18–41 (LQLWDTWADEAEKALGPLLARDRR) constitute a propeptide that is removed on maturation. The Extracellular segment spans residues 18–320 (LQLWDTWADE…APDHISVKQC (303 aa)). Position 42 is a pyrrolidone carboxylic acid (glutamine 42). 3 positions are modified to sulfotyrosine: tyrosine 46, tyrosine 48, and tyrosine 51. A disordered region spans residues 56-95 (ETEPPEMLRNSTDTTPLTGPGTPESTTVEPAARRSTGLDA). Threonine 57 carries an O-linked (GalNAc...) threonine glycan. N-linked (GlcNAc...) asparagine glycosylation is present at asparagine 65. The span at 66-82 (STDTTPLTGPGTPESTT) shows a compositional bias: low complexity. N-linked (GlcNAc...) asparagine glycosylation is present at asparagine 111. 12 repeat units span residues 122–131 (QTTQPAATEA), 132–141 (QTTQPVPTEA), 142–151 (QTTPLAATEA), 162–171 (QTTPLAATEA), 182–191 (QTTQPTGLEA), 192–201 (QTTAPAAMEA), 202–211 (QTTAPAAMEA), 212–221 (QTTPPAAMEA), 222–231 (QTTQTTAMEA), 232–241 (QTTAPEATEA), 242–251 (QTTQPTATEA), and 252–261 (QTTPLAAMEA). A 12 X 10 AA tandem repeats region spans residues 122-261 (QTTQPAATEA…QTTPLAAMEA (140 aa)). 2 disordered regions span residues 125-146 (QPAATEAQTTQPVPTEAQTTPL) and 166-252 (LAAT…TEAQ). N-linked (GlcNAc...) asparagine glycosylation occurs at asparagine 302. Residues 321–341 (LLAILILALVATIFFVCTVVL) traverse the membrane as a helical segment. Topologically, residues 342–412 (AVRLSRKGHM…DDLTLHSFLP (71 aa)) are cytoplasmic. The disordered stretch occupies residues 374 to 412 (EGPSATANGGLSKAKSPGLTPEPREDREGDDLTLHSFLP). The span at 395-406 (EPREDREGDDLT) shows a compositional bias: basic and acidic residues. Threonine 406 bears the Phosphothreonine mark. Serine 409 bears the Phosphoserine mark.

Homodimer; disulfide-linked. Interaction with P-, E- and L-selectins, through their lectin/EGF domains, is required for promoting recruitment and rolling of leukocytes. These interactions require sialyl Lewis X glycan modification but there is a differing dependence for tyrosine sulfations. Sulfation on Tyr-51 of PSGL1 is most important for high affinity L-selectin/SELL binding while P-selectin/SELP requires sulfation on Tyr-48. E-selectin/SELE binds with much lower affinity and requires the sLe(x) epitope, but apparently not tyrosine sulfation. Dimerization appears not to be required for P-selectin/SELP binding. Interacts with SNX20. Interacts with MSN and SYK; mediates the activation of SYK by SELPLG. Interacts with HAVCR1. In terms of assembly, (Microbial infection) Interacts with enterovirus 71 capsid proteins. As to quaternary structure, (Microbial infection) Interacts with Staphylococcus aureus proteins SSL5 and SSL11; these interactions prevent SELPLG-mediated neutrophil rolling. In terms of processing, displays complex, core-2, sialylated and fucosylated O-linked oligosaccharides, at least some of which appear to contain poly-N-acetyllactosamine with varying degrees of substitution. Mainly disialylated or neutral forms of the core-2 tetrasaccharide, Galbeta1--&gt;4GlcNAcbeta1--&gt;6(Galbeta1--&gt;3)GalNAcOH. The GlcN:GalN ratio is approximately 2:1 and the Man:Fuc ratio 3:5. Contains about 14% fucose with alpha-1,3 linkage present in two forms: One species is a disialylated, monofucosylated glycan, and the other, a monosialylated, trifucosylated glycan with a polylactosamine backbone. The fucosylated forms carry the Lewis antigen and are important for interaction with selectins and for functioning in leukocyte rolling. The modification containing the sialyl Lewis X glycan is on Thr-57. No sulfated O-glycans. Some N-glycosylation. Sulfation, in conjunction with the SLe(x)-containing glycan, is necessary for P- and L-selectin binding. High affinity P-selectin binding has a preferred requirement for the isomer sulfated on both Tyr-48 and Tyr-51, whereas L-selectin binding requires predominantly sulfation on Tyr-51 with sulfation on Tyr-48 playing only a minor role. These sulfations play an important role in L- and P-selectin-mediated neutrophil recruitment, and leukocyte rolling. As to expression, expressed on neutrophils, monocytes and most lymphocytes.

It localises to the membrane. In terms of biological role, a SLe(x)-type proteoglycan, which through high affinity, calcium-dependent interactions with E-, P- and L-selectins, mediates rapid rolling of leukocytes over vascular surfaces during the initial steps in inflammation. Critical for the initial leukocyte capture. Its function is as follows. (Microbial infection) Acts as a receptor for enterovirus 71. The protein is P-selectin glycoprotein ligand 1 (SELPLG) of Homo sapiens (Human).